We begin with the raw amino-acid sequence, 487 residues long: Sodium-coupled neutral amino acid symporter 1 (487 aa).

Residues 1–74 (MMHFKSGLEL…EYIPGTTSLG (74 aa)) lie on the Cytoplasmic side of the membrane. Ser-6 carries the phosphoserine modification. The residue at position 11 (Thr-11) is a Phosphothreonine. Phosphoserine occurs at positions 25, 28, 49, and 52. At Thr-54 the chain carries Phosphothreonine. The residue at position 56 (Ser-56) is a Phosphoserine. The chain crosses the membrane as a helical span at residues 75–97 (MSVFNLSNAIMGSGILGLAFALA). At 98 to 112 (NTGILLFLVLLTSVT) the chain is on the extracellular side. A helical membrane pass occupies residues 113 to 133 (LLSIYSINLLLICSKETGCMV). The Cytoplasmic segment spans residues 134–147 (YEKLGEQVFGTTGK). The helical transmembrane segment at 148–168 (FVIFGATSLQNTGAMLSYLFI) threads the bilayer. The Extracellular segment spans residues 169–188 (VKNELPSAIKFLMGKEETFS). A helical membrane pass occupies residues 189-211 (AWYVDGRVLVVIVTFGIILPLCL). Residues 212 to 216 (LKNLG) lie on the Cytoplasmic side of the membrane. A helical membrane pass occupies residues 217–237 (YLGYTSGFSLSCMVFFLIVVI). At 238–275 (YKKFQIPCIVPELNSTISANSTNADTCTPKYVTLNSKT) the chain is on the extracellular side. An intrachain disulfide couples Cys-245 to Cys-264. 2 N-linked (GlcNAc...) asparagine glycosylation sites follow: Asn-251 and Asn-257. The helical transmembrane segment at 276–296 (VYALPTIAFAFVCHPSVLPIY) threads the bilayer. Residues 297 to 312 (SELKDRSQKKMQMVSN) lie on the Cytoplasmic side of the membrane. Residues 313–333 (ISFFAMFVMYFLTAIFGYLTF) form a helical membrane-spanning segment. At 334-350 (YDNVQSDLLHKYQGKDD) the chain is on the extracellular side. A helical transmembrane segment spans residues 351–371 (ILILTVRLAVIVAVILTVPVL). Residues 372–393 (FFTVRSSLFELAKKTKFNLCRH) are Cytoplasmic-facing. Residues 394–414 (TVVTCILLVVINLLVISIPSM) traverse the membrane as a helical segment. Residues 415–416 (KD) lie on the Extracellular side of the membrane. Residues 417-437 (IFGVVGVTSANMLIFILPSSL) form a helical membrane-spanning segment. The Cytoplasmic portion of the chain corresponds to 438–452 (YLKITDQDGDKGTQR). Residues 453–473 (IWAALFLGLGVLFSLVSIPLV) form a helical membrane-spanning segment. Residues 474–487 (IYDWACSSSSDEGH) lie on the Extracellular side of the membrane.

This sequence belongs to the amino acid/polyamine transporter 2 family. In terms of processing, N-glycosylation plays an important role in the L-glutamine transport.

It localises to the cell membrane. The catalysed reaction is L-glutamine(in) + Na(+)(in) = L-glutamine(out) + Na(+)(out). It catalyses the reaction L-alanine(in) + Na(+)(in) = L-alanine(out) + Na(+)(out). It carries out the reaction L-asparagine(in) + Na(+)(in) = L-asparagine(out) + Na(+)(out). The enzyme catalyses L-histidine(in) + Na(+)(in) = L-histidine(out) + Na(+)(out). The catalysed reaction is L-serine(in) + Na(+)(in) = L-serine(out) + Na(+)(out). It catalyses the reaction L-cysteine(in) + Na(+)(in) = L-cysteine(out) + Na(+)(out). It carries out the reaction L-methionine(in) + Na(+)(in) = L-methionine(out) + Na(+)(out). The enzyme catalyses glycine(in) + Na(+)(in) = glycine(out) + Na(+)(out). The catalysed reaction is L-threonine(in) + Na(+)(in) = L-threonine(out) + Na(+)(out). It catalyses the reaction L-proline(in) + Na(+)(in) = L-proline(out) + Na(+)(out). Inhibited by alpha-(methylamino)isobutyric acid (MeAIB). Inhibited by lithium, potassium, choline ions, N-methylglucamine. The pH dependence has an allosteric effect on the transport. Its function is as follows. Symporter that cotransports short-chain neutral amino acids and sodium ions from the extraccellular to the intracellular side of the cell membrane. The transport is elctrogenic, pH dependent and driven by the Na(+) electrochemical gradient. Participates in the astroglia-derived glutamine transport into GABAergic interneurons for neurotransmitter GABA de novo synthesis. May also contributes to amino acid transport in placental trophoblast. Regulates synaptic plasticity. The protein is Sodium-coupled neutral amino acid symporter 1 of Pongo abelii (Sumatran orangutan).